The primary structure comprises 87 residues: Putative acyl-CoA-binding protein (87 aa).

An ACB domain is found at 1 to 86; it reads MSSTFEQAAA…VDELKTKYGM (86 aa). An acyl-CoA is bound by residues lysine 13, 28–32, lysine 50, lysine 54, and tyrosine 73; that span reads YALFK.

This sequence belongs to the ACBP family.

It localises to the cytoplasm. The protein resides in the nucleus. Functionally, binds medium- and long-chain acyl-CoA esters with very high affinity and may function as an intracellular carrier of acyl-CoA esters. May enhance the activity of the ceramide synthase complex. The protein is Putative acyl-CoA-binding protein of Schizosaccharomyces pombe (strain 972 / ATCC 24843) (Fission yeast).